The chain runs to 826 residues: Protein FAM171B (826 aa).

An N-terminal signal peptide occupies residues 1-32; sequence MARLCRRVPCTLLLGLAVVLLKARLVPAAARA. Residues 33 to 353 lie on the Extracellular side of the membrane; that stretch reads ELSRSDLSLI…DSKDITAYHT (321 aa). The disordered stretch occupies residues 52–71; the sequence is QQQQQKQLEEAEEERTEVPG. Asn108, Asn113, Asn213, and Asn268 each carry an N-linked (GlcNAc...) asparagine glycan. Residues 354–374 form a helical membrane-spanning segment; it reads VFLTAILGGTIVIVIGFFAVL. Topologically, residues 375-826 are cytoplasmic; that stretch reads LCYCRDKCGT…REERPLIPIN (452 aa). 3 disordered regions span residues 429–448, 474–493, and 774–826; these read NAKN…AETE, QNNY…GSKQ, and HPGE…IPIN. The span at 438 to 448 shows a compositional bias: basic and acidic residues; sequence QKKEPSKAETE. Residues 474–486 are compositionally biased toward polar residues; that stretch reads QNNYSRNPTQSLE. A compositionally biased stretch (basic and acidic residues) spans 774–786; the sequence is HPGEESPGRKSTV. A Phosphoserine modification is found at Ser794. Over residues 805–826 the composition is skewed to basic and acidic residues; the sequence is AKRDSKTNIWKKREERPLIPIN.

It belongs to the FAM171 family.

Its subcellular location is the cytoplasmic granule. The protein resides in the membrane. The protein is Protein FAM171B (FAM171B) of Homo sapiens (Human).